Reading from the N-terminus, the 451-residue chain is Phosphoglucosamine mutase (451 aa).

The Phosphoserine intermediate role is filled by S107. Positions 107, 246, 248, and 250 each coordinate Mg(2+). A Phosphoserine modification is found at S107.

Belongs to the phosphohexose mutase family. Mg(2+) serves as cofactor. In terms of processing, activated by phosphorylation.

It catalyses the reaction alpha-D-glucosamine 1-phosphate = D-glucosamine 6-phosphate. Functionally, catalyzes the conversion of glucosamine-6-phosphate to glucosamine-1-phosphate. In Burkholderia lata (strain ATCC 17760 / DSM 23089 / LMG 22485 / NCIMB 9086 / R18194 / 383), this protein is Phosphoglucosamine mutase.